The primary structure comprises 185 residues: Ribosome-recycling factor (185 aa).

Belongs to the RRF family.

The protein resides in the cytoplasm. In terms of biological role, responsible for the release of ribosomes from messenger RNA at the termination of protein biosynthesis. May increase the efficiency of translation by recycling ribosomes from one round of translation to another. The protein is Ribosome-recycling factor of Mycobacterium leprae (strain Br4923).